The sequence spans 26 residues: Thioredoxin H-type (26 aa).

Belongs to the thioredoxin family. Plant H-type subfamily.

The protein localises to the cytoplasm. Functionally, participates in various redox reactions through the reversible oxidation of the active center dithiol to a disulfide. The H form is known to activate a number of cytosolic enzymes. In Populus euphratica (Euphrates poplar), this protein is Thioredoxin H-type.